The primary structure comprises 428 residues: MGNCHTVGPNEALVVSGGCCGSDYKQYVFGGWAWAWWCISDTQRISLEIMTLQPRCEDVETAEGVALTVTGVAQVKIMTEKELLAVACEQFLGKNVQDIKNVVLQTLEGHLRSILGTLTVEQIYQDRDQFAKLVREVAAPDVGRMGIEILSFTIKDVYDKVDYLSSLGKTQTAVVQRDADIGVAEAERDAGIREAECKKEMLDVKFMADTKIADSKRAFELQKSAFSEEVNIKTAEAQLAYELQGAREQQKIRQEEIEIEVVQRKKQIAVEAQEILRTDKELIATVRRPAEAEAHRIQQIAEGEKVKQVLLAQAEAEKIRKIGEAEAAVIEAMGKAEAERMKLKAEAYQKYGDAAKMALVLEALPQIAAKISAPLTKVDEIVVLSGDNSKVTSEVNRLLAELPASVHALTGVDLSKIPLIKNATGAQV.

Glycine 2 carries N-myristoyl glycine lipidation. The S-palmitoyl cysteine; by ZDHHC5 moiety is linked to residue cysteine 4. Cysteine 19 is lipidated: S-palmitoyl cysteine. Cysteine 20 carries S-palmitoyl cysteine; by ZDHHC5 lipidation. Residue serine 405 is modified to Phosphoserine.

The protein belongs to the band 7/mec-2 family. Flotillin subfamily. As to quaternary structure, heterooligomeric complex of flotillin-1 and flotillin-2 and caveolin-1 and caveolin-2. Interacts with ECPAS. Post-translationally, ZDHHC5-catalyzed palmitoylation may be required for the formation of higher-order complexes and for neurite outgrowth in cultured neural stem cells. As to expression, expressed in many tissues, including suprabasal epidermis, hair follicles, heart, lung, thymus, spleen, liver, kidney and brain. Not expressed in skeletal muscle.

The protein resides in the cell membrane. It localises to the membrane. The protein localises to the caveola. Its subcellular location is the endosome. Functionally, may act as a scaffolding protein within caveolar membranes, functionally participating in formation of caveolae or caveolae-like vesicles. May be involved in epidermal cell adhesion and epidermal structure and function. The protein is Flotillin-2 (Flot2) of Mus musculus (Mouse).